Consider the following 613-residue polypeptide: Zinc metalloproteinase-disintegrin-like atragin (613 aa).

The N-terminal stretch at Met1 to Ser20 is a signal peptide. Positions Ile21–Leu191 are excised as a propeptide. The region spanning Lys205 to Pro400 is the Peptidase M12B domain. Positions 208 and 292 each coordinate Ca(2+). 2 disulfide bridges follow: Cys316/Cys395 and Cys356/Cys379. Positions 341, 345, and 351 each coordinate Zn(2+). Residues Cys395, Asn398, Ile410, Asn413, Phe415, Glu417, Glu420, and Asp423 each contribute to the Ca(2+) site. A Disintegrin domain is found at Pro408–Asn494. 15 cysteine pairs are disulfide-bonded: Cys411–Cys440, Cys422–Cys435, Cys424–Cys430, Cys434–Cys457, Cys448–Cys454, Cys453–Cys479, Cys466–Cys486, Cys473–Cys505, Cys498–Cys510, Cys517–Cys567, Cys532–Cys575, Cys542–Cys577, Cys545–Cys555, Cys562–Cys601, and Cys595–Cys606. N-linked (GlcNAc...) asparagine glycosylation occurs at Asn436. A D/ECD-tripeptide motif is present at residues Asp472–Asp474. Ca(2+) is bound by residues Asp474, Leu475, Glu477, Asp489, and Val490. The tract at residues Val560 to Ile574 is hypervariable region that may play important roles toward cell migration.

This sequence belongs to the venom metalloproteinase (M12B) family. P-III subfamily. P-IIIa sub-subfamily. In terms of assembly, monomer. The cofactor is Zn(2+). As to expression, expressed by the venom gland.

The protein localises to the secreted. Snake venom zinc metalloproteinase that seems to inhibit cell migration. This activity is dominated by the local structure of the hyper-variable region. This Naja atra (Chinese cobra) protein is Zinc metalloproteinase-disintegrin-like atragin.